The sequence spans 1149 residues: ATP-dependent helicase/deoxyribonuclease subunit B (1149 aa).

8-15 (GRAGSGKS) contributes to the ATP binding site. Positions 788, 1106, 1109, and 1115 each coordinate [4Fe-4S] cluster.

It belongs to the helicase family. AddB/RexB type 1 subfamily. As to quaternary structure, heterodimer of AddA and AddB. The cofactor is Mg(2+). [4Fe-4S] cluster is required as a cofactor.

In terms of biological role, the heterodimer acts as both an ATP-dependent DNA helicase and an ATP-dependent, dual-direction single-stranded exonuclease. Recognizes the chi site generating a DNA molecule suitable for the initiation of homologous recombination. The AddB subunit has 5' -&gt; 3' nuclease activity but not helicase activity. This chain is ATP-dependent helicase/deoxyribonuclease subunit B, found in Ruminiclostridium cellulolyticum (strain ATCC 35319 / DSM 5812 / JCM 6584 / H10) (Clostridium cellulolyticum).